The primary structure comprises 269 residues: Phosphate import ATP-binding protein PstB (269 aa).

Positions 21–264 (IEIKDFNFFY…PKDRRTENYI (244 aa)) constitute an ABC transporter domain. 55–62 (GPSGCGKT) lines the ATP pocket.

This sequence belongs to the ABC transporter superfamily. Phosphate importer (TC 3.A.1.7) family. The complex is composed of two ATP-binding proteins (PstB), two transmembrane proteins (PstC and PstA) and a solute-binding protein (PstS).

It is found in the cell membrane. The catalysed reaction is phosphate(out) + ATP + H2O = ADP + 2 phosphate(in) + H(+). Functionally, part of the ABC transporter complex PstSACB involved in phosphate import. Responsible for energy coupling to the transport system. The protein is Phosphate import ATP-binding protein PstB of Mycoplasma capricolum subsp. capricolum (strain California kid / ATCC 27343 / NCTC 10154).